The following is a 199-amino-acid chain: Transgelin-3 (199 aa).

The 113-residue stretch at 24–136 (ADLENKLVDW…RTLMALGSVA (113 aa)) folds into the Calponin-homology (CH) domain. S163 is subject to Phosphoserine. Residues 174 to 199 (IGLQMGSNKGASQAGMTGYGMPRQIM) form a Calponin-like repeat. Positions 176–188 (LQMGSNKGASQAG) are enriched in polar residues. Positions 176-199 (LQMGSNKGASQAGMTGYGMPRQIM) are disordered.

It belongs to the calponin family.

The sequence is that of Transgelin-3 (TAGLN3) from Pongo abelii (Sumatran orangutan).